Here is a 660-residue protein sequence, read N- to C-terminus: Bifunctional polymyxin resistance protein ArnA (660 aa).

The formyltransferase ArnAFT stretch occupies residues 1 to 304 (MKAVIFAYHD…TLGLVAGACL (304 aa)). His-104 (proton donor; for formyltransferase activity) is an active-site residue. Residues Arg-114 and 136–140 (VKRAD) each bind (6R)-10-formyltetrahydrofolate. The dehydrogenase ArnADH stretch occupies residues 314–660 (RRIRVLILGV…RSVDIAERAS (347 aa)). NAD(+) is bound by residues Asp-347 and 368-369 (DI). UDP-alpha-D-glucuronate contacts are provided by residues Ala-393, Tyr-398, and 432 to 433 (TS). Residue Glu-434 is the Proton acceptor; for decarboxylase activity of the active site. UDP-alpha-D-glucuronate is bound by residues Arg-460, Asn-492, 526–535 (KLIDGGQQKR), and Tyr-613. Arg-619 serves as the catalytic Proton donor; for decarboxylase activity.

It in the N-terminal section; belongs to the Fmt family. UDP-L-Ara4N formyltransferase subfamily. This sequence in the C-terminal section; belongs to the NAD(P)-dependent epimerase/dehydratase family. UDP-glucuronic acid decarboxylase subfamily. As to quaternary structure, homohexamer, formed by a dimer of trimers.

The catalysed reaction is UDP-alpha-D-glucuronate + NAD(+) = UDP-beta-L-threo-pentopyranos-4-ulose + CO2 + NADH. The enzyme catalyses UDP-4-amino-4-deoxy-beta-L-arabinose + (6R)-10-formyltetrahydrofolate = UDP-4-deoxy-4-formamido-beta-L-arabinose + (6S)-5,6,7,8-tetrahydrofolate + H(+). It functions in the pathway nucleotide-sugar biosynthesis; UDP-4-deoxy-4-formamido-beta-L-arabinose biosynthesis; UDP-4-deoxy-4-formamido-beta-L-arabinose from UDP-alpha-D-glucuronate: step 1/3. The protein operates within nucleotide-sugar biosynthesis; UDP-4-deoxy-4-formamido-beta-L-arabinose biosynthesis; UDP-4-deoxy-4-formamido-beta-L-arabinose from UDP-alpha-D-glucuronate: step 3/3. Its pathway is bacterial outer membrane biogenesis; lipopolysaccharide biosynthesis. Functionally, bifunctional enzyme that catalyzes the oxidative decarboxylation of UDP-glucuronic acid (UDP-GlcUA) to UDP-4-keto-arabinose (UDP-Ara4O) and the addition of a formyl group to UDP-4-amino-4-deoxy-L-arabinose (UDP-L-Ara4N) to form UDP-L-4-formamido-arabinose (UDP-L-Ara4FN). The modified arabinose is attached to lipid A and is required for resistance to polymyxin and cationic antimicrobial peptides. The sequence is that of Bifunctional polymyxin resistance protein ArnA from Salmonella paratyphi A (strain ATCC 9150 / SARB42).